A 195-amino-acid chain; its full sequence is Dephospho-CoA kinase (195 aa).

The region spanning 3–195 is the DPCK domain; it reads KIGLTGGIGS…ANMKNVIAEI (193 aa). 11 to 16 contacts ATP; that stretch reads GSGKST.

It belongs to the CoaE family.

It localises to the cytoplasm. The enzyme catalyses 3'-dephospho-CoA + ATP = ADP + CoA + H(+). It participates in cofactor biosynthesis; coenzyme A biosynthesis; CoA from (R)-pantothenate: step 5/5. In terms of biological role, catalyzes the phosphorylation of the 3'-hydroxyl group of dephosphocoenzyme A to form coenzyme A. This Corynebacterium glutamicum (Brevibacterium saccharolyticum) protein is Dephospho-CoA kinase.